Consider the following 118-residue polypeptide: UPF0342 protein BAMEG_3696 (118 aa).

The protein belongs to the UPF0342 family.

This chain is UPF0342 protein BAMEG_3696, found in Bacillus anthracis (strain CDC 684 / NRRL 3495).